A 948-amino-acid chain; its full sequence is Coiled-coil domain-containing protein 66 (948 aa).

2 positions are modified to phosphothreonine: Thr-115 and Thr-121. Ser-369 carries the phosphoserine modification. The segment at 458–499 (DRRRQKQLEHQKAITAQVEEKRRKKQLEEEQRKKEEQEEELR) is disordered. Residues 467–558 (HQKAITAQVE…EQRIRELAQK (92 aa)) adopt a coiled-coil conformation. The segment at 570–948 (GVDTIQMEYN…NQEESFGSSF (379 aa)) is mediates localization to cilia, centrosomes and spindle microtubules and the interaction with PCM1, CEP290, CEP104 and CSPP1. At Ser-606 the chain carries Phosphoserine. 2 disordered regions span residues 690–713 (QTKH…KRYI) and 788–808 (SFSK…RTQQ).

Homodimer; disulfide-linked. Interacts with CEP290. Interacts with PCM1. Interacts with ARMC9, TOGARAM1, CSPP1 and CEP104. Interacts with CDK5RAP2, CEP152, CEP192, TBG1 and PRC1. In terms of tissue distribution, widely expressed (at protein level). Expressed in retina, mainly in photoreceptors but also in outer plexiform and ganglion cell layers (at protein level).

It is found in the cytoplasm. The protein localises to the cytoskeleton. Its subcellular location is the microtubule organizing center. It localises to the centrosome. The protein resides in the centriolar satellite. It is found in the cell projection. The protein localises to the cilium. Its subcellular location is the cilium basal body. It localises to the cilium axoneme. The protein resides in the photoreceptor inner segment. It is found in the photoreceptor outer segment. The protein localises to the spindle. Its subcellular location is the midbody. Functionally, microtubule-binding protein required for ciliogenesis. May function in ciliogenesis by mediating the transport of proteins like BBS4 to the cilium, but also through the organization of the centriolar satellites. Required for the assembly of signaling-competent cilia with proper structure and length. Mediates this function in part by regulating transition zone assembly and basal body recruitment of the IFT-B complex. Cooperates with the ciliopathy proteins CSPP1 and CEP104 during cilium length regulation. Plays two important roles during cell division. First, is required for mitotic progression via regulation of spindle assembly, organization and orientation, levels of spindle microtubules (MTs), kinetochore-fiber integrity, and chromosome alignment. Second, functions during cytokinesis in part by regulating assembly and organization of central spindle and midbody MTs. Plays a role in retina morphogenesis and/or homeostasis. The sequence is that of Coiled-coil domain-containing protein 66 from Homo sapiens (Human).